We begin with the raw amino-acid sequence, 525 residues long: Bifunctional purine biosynthesis protein PurH (525 aa).

An MGS-like domain is found at 1 to 149; it reads MSDPVIKRAL…KNNESVTVVT (149 aa).

Belongs to the PurH family.

The enzyme catalyses (6R)-10-formyltetrahydrofolate + 5-amino-1-(5-phospho-beta-D-ribosyl)imidazole-4-carboxamide = 5-formamido-1-(5-phospho-D-ribosyl)imidazole-4-carboxamide + (6S)-5,6,7,8-tetrahydrofolate. It carries out the reaction IMP + H2O = 5-formamido-1-(5-phospho-D-ribosyl)imidazole-4-carboxamide. Its pathway is purine metabolism; IMP biosynthesis via de novo pathway; 5-formamido-1-(5-phospho-D-ribosyl)imidazole-4-carboxamide from 5-amino-1-(5-phospho-D-ribosyl)imidazole-4-carboxamide (10-formyl THF route): step 1/1. The protein operates within purine metabolism; IMP biosynthesis via de novo pathway; IMP from 5-formamido-1-(5-phospho-D-ribosyl)imidazole-4-carboxamide: step 1/1. In Prosthecochloris aestuarii (strain DSM 271 / SK 413), this protein is Bifunctional purine biosynthesis protein PurH.